The chain runs to 689 residues: FAST kinase domain-containing protein 2, mitochondrial (689 aa).

Phosphoserine is present on residues Ser113 and Ser126. An RAP domain is found at 617 to 674; that stretch reads VAVLCVPKSVYCLNSCHPRGLMAMKIRHLNVMGFHVILIHNWELKKLKMEDAVTFVRK.

This sequence belongs to the FAST kinase family. In terms of assembly, monomer. Found in a complex with GRSF1, DDX28, DHX30 and FASTKD5. Associates with the 16S mitochondrial rRNA (16S mt-rRNA). Forms a regulatory protein-RNA complex, consisting of RCC1L, NGRN, RPUSD3, RPUSD4, TRUB2, FASTKD2 and 16S mt-rRNA. Ubiquitously expressed. Expression detected in spleen, testis, colon, heart, smooth muscle, kidney, brain, lung, liver, brown and white adipose tissue with highest expression in testis, heart and smooth muscle.

Its subcellular location is the mitochondrion matrix. It is found in the mitochondrion nucleoid. Functionally, plays an important role in assembly of the mitochondrial large ribosomal subunit. As a component of a functional protein-RNA module, consisting of RCC1L, NGRN, RPUSD3, RPUSD4, TRUB2, FASTKD2 and 16S mitochondrial ribosomal RNA (16S mt-rRNA), controls 16S mt-rRNA abundance and is required for intra-mitochondrial translation. May play a role in mitochondrial apoptosis. The sequence is that of FAST kinase domain-containing protein 2, mitochondrial (Fastkd2) from Mus musculus (Mouse).